The sequence spans 192 residues: Ion-translocating oxidoreductase complex subunit B (192 aa).

A hydrophobic region spans residues 1 to 26; sequence MNAIWIAVAAVSLLGLAFGAILGYAS. The region spanning 32-91 is the 4Fe-4S domain; it reads EDDPVVEKIDEILPQSQCGQCGYPGCRPYAEAISCNGEKINRCAPGGEAVMLKIAELLNV. [4Fe-4S] cluster is bound by residues C49, C52, C57, C74, C117, C120, C123, C127, C147, C150, C153, and C157. 4Fe-4S ferredoxin-type domains follow at residues 108–137 and 138–167; these read MVAV…GATR and AMHT…LQPV.

This sequence belongs to the 4Fe4S bacterial-type ferredoxin family. RnfB subfamily. As to quaternary structure, the complex is composed of six subunits: RsxA, RsxB, RsxC, RsxD, RsxE and RsxG. [4Fe-4S] cluster serves as cofactor.

It localises to the cell inner membrane. Its function is as follows. Part of a membrane-bound complex that couples electron transfer with translocation of ions across the membrane. Required to maintain the reduced state of SoxR. This is Ion-translocating oxidoreductase complex subunit B from Escherichia coli O139:H28 (strain E24377A / ETEC).